Reading from the N-terminus, the 99-residue chain is DNA-binding protein Fis (99 aa).

The H-T-H motif DNA-binding region spans Gln-75–Lys-94.

It belongs to the transcriptional regulatory Fis family. In terms of assembly, homodimer.

Its function is as follows. Activates ribosomal RNA transcription. Plays a direct role in upstream activation of rRNA promoters. The protein is DNA-binding protein Fis of Pasteurella multocida (strain Pm70).